Consider the following 162-residue polypeptide: Sorting nexin-3 (162 aa).

Residues 1 to 23 form a disordered region; the sequence is MPREFKSFGSTEKSLLSKGHGEP. A PX domain is found at 38–161; that stretch reads IEVHNPKTHI…VRFIEAEKFV (124 aa). A 1,2-diacyl-sn-glycero-3-phospho-(1D-myo-inositol-3-phosphate) is bound by residues Arg81, Ser83, Lys112, and Arg127.

Belongs to the sorting nexin family. As to quaternary structure, monomer. Interacts with RBD2, YIF1, YIP1 and YIP5.

It localises to the cytoplasm. It is found in the golgi apparatus membrane. Its subcellular location is the prevacuolar compartment membrane. Functionally, required for retention of late Golgi membrane proteins. Component of the retrieval machinery that functions by direct interaction with the cytosolic tails of certain TGN membrane proteins during the sorting/budding process at the prevacuolar compartment. Binds phosphatidylinositol 3-phosphate (PtdIns(P3)). The chain is Sorting nexin-3 (SNX3) from Saccharomyces cerevisiae (strain ATCC 204508 / S288c) (Baker's yeast).